Here is a 583-residue protein sequence, read N- to C-terminus: Arginine--tRNA ligase (583 aa).

The 'HIGH' region signature appears at 131–141 (ANPTGPMHVGH).

This sequence belongs to the class-I aminoacyl-tRNA synthetase family. As to quaternary structure, monomer.

It is found in the cytoplasm. The enzyme catalyses tRNA(Arg) + L-arginine + ATP = L-arginyl-tRNA(Arg) + AMP + diphosphate. This Parvibaculum lavamentivorans (strain DS-1 / DSM 13023 / NCIMB 13966) protein is Arginine--tRNA ligase.